Here is a 309-residue protein sequence, read N- to C-terminus: MRIFFASSDGIALEVLKKISDQYDVVGVLTAPDKPSGRGLSLKVNDIKREALSRKITVLQPVVLDADVINLVKSLEPELMLVFSYGKIFKQEFLDIFPVGCINIHPSLLPKYRGPSPIQTVILNGDSVSGITVQKMTLEMDSGNILAQSQFEIKSFNTSVDIFEYVSLNSFDLVIEALNKLLKGDIGIVQDKNNATYCSFLGKEHRTIDFKLSAFDIKNKINAYNPWPLARARLDNNEIIFYRADFISTNDYDDQVIGKIIAFDPSKGLLVKTGDGILVVLELQRIGKKVLDCVSFYHGNRDLIGKVFS.

107-110 (SLLP) serves as a coordination point for (6S)-5,6,7,8-tetrahydrofolate.

This sequence belongs to the Fmt family.

It carries out the reaction L-methionyl-tRNA(fMet) + (6R)-10-formyltetrahydrofolate = N-formyl-L-methionyl-tRNA(fMet) + (6S)-5,6,7,8-tetrahydrofolate + H(+). In terms of biological role, attaches a formyl group to the free amino group of methionyl-tRNA(fMet). The formyl group appears to play a dual role in the initiator identity of N-formylmethionyl-tRNA by promoting its recognition by IF2 and preventing the misappropriation of this tRNA by the elongation apparatus. The protein is Methionyl-tRNA formyltransferase of Borrelia recurrentis (strain A1).